A 267-amino-acid chain; its full sequence is tRNA pseudouridine synthase A (267 aa).

The active-site Nucleophile is D51. Y109 lines the substrate pocket.

Belongs to the tRNA pseudouridine synthase TruA family.

The enzyme catalyses uridine(38/39/40) in tRNA = pseudouridine(38/39/40) in tRNA. Formation of pseudouridine at positions 38, 39 and 40 in the anticodon stem and loop of transfer RNAs. This Methanothrix thermoacetophila (strain DSM 6194 / JCM 14653 / NBRC 101360 / PT) (Methanosaeta thermophila) protein is tRNA pseudouridine synthase A.